Reading from the N-terminus, the 195-residue chain is Putative deoxynucleoside kinase (195 aa).

This chain is Putative deoxynucleoside kinase, found in Frog virus 3 (isolate Goorha) (FV-3).